Consider the following 354-residue polypeptide: Homer protein homolog 1 (354 aa).

In terms of domain architecture, WH1 spans 1-110 (MGEQPIFSTR…EKFQEFKEAA (110 aa)). G2 is subject to N-acetylglycine. Positions 114 to 173 (KEKSQEKMELTSTPSQESAGGDLQSPLTPESINGTDDERTPDVTQNSEPRAEPTQNALPF) are disordered. 2 stretches are compositionally biased toward polar residues: residues 138–147 (SPLTPESING) and 155–173 (DVTQ…ALPF). Positions 181–352 (KHWEAELATL…LRDNLAKLLE (172 aa)) form a coiled coil. Residues 290–354 (KLQEVEIRNK…DNLAKLLECS (65 aa)) form a required for tetramerization region. A Phosphoserine modification is found at S306.

The protein belongs to the Homer family. In terms of assembly, tetramer; this tetrameric structure is critical for forming the high-order complex with SHANK1, which in turn is necessary for the structural and functional integrity of dendritic spines. Interacts with GRM1, GRM5, ITPR1, DNM3, RYR1, RYR2 and SHANK3. Interacts with IFT57 and OPHN1. Isoform 1 encodes a coiled-coil structure that mediates homo- and heteromultimerization. Interacts with SHANK1; forms high-order polymerized complex with a mesh-like network structure, at least composed of SHANK1, HOMER1 and DLGAP1; the complex formation is SHANK1 multimerization dependent. Interacts with NFATC4. Interacts with DAGLA (via PPXXF motif); this interaction is required for the cell membrane localization of DAGLA. Interacts with SRGAP2.

Its subcellular location is the cytoplasm. It is found in the postsynaptic density. The protein resides in the synapse. The protein localises to the cell projection. It localises to the dendritic spine. Its function is as follows. Postsynaptic density scaffolding protein. Binds and cross-links cytoplasmic regions of GRM1, GRM5, ITPR1, DNM3, RYR1, RYR2, SHANK1 and SHANK3. By physically linking GRM1 and GRM5 with ER-associated ITPR1 receptors, it aids the coupling of surface receptors to intracellular calcium release. May also couple GRM1 to PI3 kinase through its interaction with AGAP2. Isoform 1 regulates the trafficking and surface expression of GRM5. Isoform 3 acts as a natural dominant negative, in dynamic competition with constitutively expressed isoform 1 to regulate synaptic metabotropic glutamate function. Isoform 3, may be involved in the structural changes that occur at synapses during long-lasting neuronal plasticity and development. Forms a high-order complex with SHANK1, which in turn is necessary for the structural and functional integrity of dendritic spines. Negatively regulates T cell activation by inhibiting the calcineurin-NFAT pathway. Acts by competing with calcineurin/PPP3CA for NFAT protein binding, hence preventing NFAT activation by PPP3CA. This is Homer protein homolog 1 from Homo sapiens (Human).